Consider the following 345-residue polypeptide: WD40 repeat protein poxJ (345 aa).

WD repeat units lie at residues Ala15–Ser49, Leu59–Gln100, Val101–Thr146, and Val250–Ser284.

This sequence belongs to the WD repeat rae1 family.

The protein operates within secondary metabolite biosynthesis. In terms of biological role, WD40 repeat protein; part of the gene cluster that mediates the biosynthesis of oxaleimides, cytotoxic compounds containing an unusual disubstituted succinimide moiety. The first step of the pathway is provided by the HR-PKS poxF that serves in a new mode of collaborative biosynthesis with the PKS-NRPS poxE, by providing the olefin containing amino acid substrate via the synthesis of an ACP-bound dec-4-enoate. The cytochrome P450 monooxygenase poxM-catalyzed oxidation at the alpha-position creates the enzyme-bound 2-hydroxydec-4-enoyl-ACP thioester, which may be prone to spontaneous hydrolysis to yield 2-hydroxydec-4-enoic acid due to increased electrophilicity of the carbonyl. 2-hydroxydec-4-enoic acid can then be further oxidized by poxM to yield the alpha-ketoacid 2-oxodec-4-enoicacid, which is reductively aminated by the aminotransferase poxL to yield (S,E)-2-aminodec-4-enoic acid. The Hybrid PKS-NRPS synthetase poxE then performs condensation between the octaketide product of its PKS modules and the amino group of (S,E)-2-aminodec-4-enoic acid which is activated and incorporated by the adenylation domain. The resulting aminoacyl product can be cyclized by the Diels-Alderase PoxQ and reductively released by the reductive (R) domain of poxE to yield an aldehyde intermediate. The released aldehyde is then substrate for a Knoevenagel condensation by the hydrolyase poxO followed by an oxidation at the 5-position of the pyrrolidone ring. The presence of the olefin from the amino acid building block allows for migration of the substituted allyl group to occur. This allylic transposition reaction takes place in a conjugate addition, semipinacol-like fashion to yield a succinimide intermediate. Iterative two-electron oxidations of the C7 methyl of the succinimide intermediate to the carboxylic acid can be catalyzed by one of two remaining cytochrome P450 monooxygenasess poxC or poxD to yield oxaleimide A. Subsequent oxidation yields the maleimide scaffold oxaleimide I. Both oxaleimide A and oxaleimide I can undergo oxidative modifications in the decalin ring to yield the series of products oxaleimides B to H. The polypeptide is WD40 repeat protein poxJ (Penicillium oxalicum (strain 114-2 / CGMCC 5302) (Penicillium decumbens)).